A 324-amino-acid chain; its full sequence is 6-methylsalicylic acid decarboxylase (324 aa).

4 residues coordinate Zn(2+): H7, H9, H157, and D274.

The protein belongs to the metallo-dependent hydrolases superfamily. ACMSD family. Monomer.

The protein resides in the cytoplasm. Its subcellular location is the cytosol. It carries out the reaction 6-methylsalicylate + H(+) = 3-methylphenol + CO2. The protein operates within mycotoxin biosynthesis; patulin biosynthesis. In terms of biological role, 6-methylsalicylic acid decarboxylase; part of the gene cluster that mediates the biosynthesis of patulin, an acetate-derived tetraketide mycotoxin produced by several fungal species that shows antimicrobial properties against several bacteria. PatG catalyzes the decarboxylation of 6-methylsalicylic acid to yield m-cresol. The pathway begins with the synthesis of 6-methylsalicylic acid by the polyketide synthase (PKS) patK via condensation of acetate and malonate units. The 6-methylsalicylic acid decarboxylase patG then catalyzes the decarboxylation of 6-methylsalicylic acid to yield m-cresol (also known as 3-methylphenol). These first reactions occur in the cytosol. The intermediate m-cresol is then transported into the endoplasmic reticulum where the cytochrome P450 monooxygenase patH converts it to m-hydroxybenzyl alcohol, which is further converted to gentisyl alcohol by the cytochrome P450 monooxygenase patI. The oxidoreductases patJ and patO further convert gentisyl alcohol to isoepoxydon in the vacuole. PatN catalyzes then the transformation of isoepoxydon into phyllostine. The cluster protein patF is responsible for the conversion from phyllostine to neopatulin whereas the alcohol dehydrogenase patD converts neopatulin to E-ascladiol. The steps between isoepoxydon and E-ascladiol occur in the cytosol, and E-ascladiol is probably secreted to the extracellular space by one of the cluster-specific transporters patC or patM. Finally, the secreted patulin synthase patE catalyzes the conversion of E-ascladiol to patulin. This chain is 6-methylsalicylic acid decarboxylase, found in Penicillium expansum (Blue mold rot fungus).